The chain runs to 86 residues: Chymotrypsin inhibitor (86 aa).

A signal peptide spans 1-16 (MKTLCIFLVLVVAVAA). 4 cysteine pairs are disulfide-bonded: cysteine 26–cysteine 58, cysteine 38–cysteine 50, cysteine 42–cysteine 82, and cysteine 60–cysteine 76. The region spanning 26 to 82 (CPPNKEFGSYGDCPPSCLKNPPNFCTLKLNYGCKCKEGYVLTRYQDYESDCIKPEEC) is the TIL domain.

The protein belongs to the serine protease inhibitor-like (TIL domain-containing) family. As to expression, only expressed in fat body.

It localises to the secreted. Its function is as follows. Serine protease inhibitor that inhibits chymotrypsin (IC(50)=34.13 nM, Ki=49.85 nM), microbial serine proteases (subtilisin A (IC(50)=21.31 nM, Ki=20.51 nM) and proteinase K (IC(50)=52.56 nM, Ki=65.42 nM)), as well as human neutrophil elastase (IC(50)=11.54 nM, Ki=8.74 nM), and porcine pancreatic elastase (IC(50)=19.07 nM, Ki=11.32 nM). In Araneus ventricosus (Orbweaver spider), this protein is Chymotrypsin inhibitor.